The chain runs to 397 residues: Argininosuccinate synthase (397 aa).

Residue Ala8–Ser16 participates in ATP binding. Residues Tyr86 and Ser91 each contribute to the L-citrulline site. Position 116 (Gly116) interacts with ATP. L-aspartate is bound by residues Thr118, Asn122, and Asp123. Asn122 contacts L-citrulline. The L-citrulline site is built by Arg126, Ser175, Ser184, Glu260, and Tyr272.

This sequence belongs to the argininosuccinate synthase family. Type 1 subfamily. Homotetramer.

It localises to the cytoplasm. The enzyme catalyses L-citrulline + L-aspartate + ATP = 2-(N(omega)-L-arginino)succinate + AMP + diphosphate + H(+). It participates in amino-acid biosynthesis; L-arginine biosynthesis; L-arginine from L-ornithine and carbamoyl phosphate: step 2/3. This Clostridium botulinum (strain 657 / Type Ba4) protein is Argininosuccinate synthase.